The chain runs to 121 residues: Protein PilH (121 aa).

The 117-residue stretch at 3 to 119 folds into the Response regulatory domain; sequence RILIVDDSPT…TLLKTINAVL (117 aa). The residue at position 52 (Asp52) is a 4-aspartylphosphate.

In terms of biological role, may be a part of a signal-transduction system that regulates twitching motility by controlling pilus function (extension and retraction). This is Protein PilH (pilH) from Pseudomonas aeruginosa (strain ATCC 15692 / DSM 22644 / CIP 104116 / JCM 14847 / LMG 12228 / 1C / PRS 101 / PAO1).